Consider the following 375-residue polypeptide: Probable 1-acyl-sn-glycerol-3-phosphate acyltransferase 5 (375 aa).

The next 2 membrane-spanning stretches (helical) occupy residues 21 to 41 and 57 to 77; these read IICL…WGFL and CVSF…EKIN. The HXXXXD motif signature appears at 100-105; the sequence is HRTEVD. The next 2 membrane-spanning stretches (helical) occupy residues 312-332 and 337-357; these read YLIN…LTFF and WFRI…HFNL.

It belongs to the 1-acyl-sn-glycerol-3-phosphate acyltransferase family. Widely expressed at low level.

It is found in the membrane. The enzyme catalyses a 1-acyl-sn-glycero-3-phosphate + an acyl-CoA = a 1,2-diacyl-sn-glycero-3-phosphate + CoA. It participates in phospholipid metabolism; CDP-diacylglycerol biosynthesis; CDP-diacylglycerol from sn-glycerol 3-phosphate: step 2/3. Functionally, may convert lysophosphatidic acid (LPA) into phosphatidic acid by incorporating acyl moiety at the 2 position. Has no activity when expressed in bacteria or yeast. This chain is Probable 1-acyl-sn-glycerol-3-phosphate acyltransferase 5 (LPAT5), found in Arabidopsis thaliana (Mouse-ear cress).